A 207-amino-acid chain; its full sequence is Ciliary microtubule-associated protein 3 (207 aa).

As to quaternary structure, interacts with proteins involved in ciliary transport, including ARL13B, CETN1, KIF3A, RAB6A, RAB8A, TUBB1 and TUBG1. Interacts with AURKA. Expressed in tissues rich in ciliated cells, such as lung, kidney, vas deferens and testis. Both isoforms 1 and 2 are expressed in testis.

It localises to the golgi apparatus. It is found in the golgi stack. The protein localises to the trans-Golgi network. Its subcellular location is the nucleus. The protein resides in the cytoplasm. It localises to the cytoplasmic vesicle. In terms of biological role, during primary cilia disassembly, involved in cilia disassembly. Required specifically to control cilia retraction as well as the liberation and duplication of the basal body/centrosome. May act by stimulating AURKA activity at the basal body in a cell cycle-dependent manner. The protein is Ciliary microtubule-associated protein 3 (Cimap3) of Mus musculus (Mouse).